The sequence spans 274 residues: NH(3)-dependent NAD(+) synthetase (274 aa).

Residue 46-53 participates in ATP binding; it reads GISGGQDS. Asp-52 serves as a coordination point for Mg(2+). Residue Arg-140 participates in deamido-NAD(+) binding. Thr-160 is a binding site for ATP. Glu-165 provides a ligand contact to Mg(2+). Deamido-NAD(+) is bound by residues Lys-173 and Asp-180. ATP is bound by residues Lys-189 and Thr-211. Residue 260–261 coordinates deamido-NAD(+); the sequence is HK.

Belongs to the NAD synthetase family. In terms of assembly, homodimer.

It carries out the reaction deamido-NAD(+) + NH4(+) + ATP = AMP + diphosphate + NAD(+) + H(+). It participates in cofactor biosynthesis; NAD(+) biosynthesis; NAD(+) from deamido-NAD(+) (ammonia route): step 1/1. Catalyzes the ATP-dependent amidation of deamido-NAD to form NAD. Uses ammonia as a nitrogen source. The sequence is that of NH(3)-dependent NAD(+) synthetase from Listeria monocytogenes serotype 4b (strain CLIP80459).